A 252-amino-acid polypeptide reads, in one-letter code: Protein BTG3 (252 aa).

Positions 138–162 (VTSDYHSGSSSSDEDTSKEVEVKPS) are disordered.

It belongs to the BTG family. Highly expressed in the brain.

Functionally, overexpression impairs serum-induced cell cycle progression from the G0/G1 to S phase. In Rattus norvegicus (Rat), this protein is Protein BTG3.